A 388-amino-acid chain; its full sequence is Lipid-A-disaccharide synthase (388 aa).

The protein belongs to the LpxB family.

It catalyses the reaction a lipid X + a UDP-2-N,3-O-bis[(3R)-3-hydroxyacyl]-alpha-D-glucosamine = a lipid A disaccharide + UDP + H(+). It functions in the pathway bacterial outer membrane biogenesis; LPS lipid A biosynthesis. In terms of biological role, condensation of UDP-2,3-diacylglucosamine and 2,3-diacylglucosamine-1-phosphate to form lipid A disaccharide, a precursor of lipid A, a phosphorylated glycolipid that anchors the lipopolysaccharide to the outer membrane of the cell. This Sulfurihydrogenibium sp. (strain YO3AOP1) protein is Lipid-A-disaccharide synthase.